A 339-amino-acid polypeptide reads, in one-letter code: Methyltransferase ptaI (339 aa).

This sequence belongs to the methyltransferase superfamily.

Its pathway is secondary metabolite biosynthesis. Functionally, methyltransferase; part of the gene cluster that mediates the biosynthesis of pestheic acid, a diphenyl ether which is a biosynthetic precursor of the unique chloropupukeananes. The biosynthesis initiates from condensation of acetate and malonate units catalyzed by the non-reducing PKS ptaA. As the ptaA protein is TE/CLC domain-deficient, hydrolysis and Claisen cyclization of the polyketide could be catalyzed by ptaB containing a beta-lactamase domain. The ptaB protein might hydrolyze the thioester bond between the ACP of ptaA and the intermediate to release atrochrysone carboxylic acid, which is spontaneously dehydrated to form endocrocin anthrone. Endocrocin anthrone is then converted to endocrocin, catalyzed by the anthrone oxygenase ptaC. Spontaneous decarboxylation of endocrocin occurs to generate emodin. An O-methyltransferase (ptaH or ptaI) could methylate emodin to form physcion. PtaJ could then catalyze the oxidative cleavage of physcion, and rotation of the intermediate could then afford desmethylisosulochrin. PtaF, a putative NADH-dependent oxidoreductase, might also participate in the oxidative cleavage step. Desmethylisosulochrin is then transformed by another O-methyltransferase (ptaH or ptaI) to form isosulochrin. Chlorination of isosulochrin by ptaM in the cyclohexadienone B ring then produces chloroisosulochrin. PtaE is responsible for the oxidative coupling reactions of both benzophenones isosulouchrin and chloroisosulochrin to RES-1214-1 and pestheic acid respectively, regardless of chlorination. This is Methyltransferase ptaI from Pestalotiopsis fici (strain W106-1 / CGMCC3.15140).